The primary structure comprises 814 residues: Kinesin-like protein KIF6 (814 aa).

The region spanning 5 to 345 (TIQIFARVKP…CRFAQRVALI (341 aa)) is the Kinesin motor domain. 97-104 (GQTGSGKT) serves as a coordination point for ATP. 3 coiled-coil regions span residues 356 to 385 (NPRL…QRTE), 456 to 494 (LKEE…EALH), and 588 to 683 (EAKA…KEFE). Residues 752–788 (LPSPCPSPHSQKQSSTSTPLEDSIPKRPVSSIPLTGD) are disordered. A compositionally biased stretch (polar residues) spans 759-771 (PHSQKQSSTSTPL).

The protein belongs to the TRAFAC class myosin-kinesin ATPase superfamily. Kinesin family.

The protein resides in the cytoplasm. It is found in the cytoskeleton. The chain is Kinesin-like protein KIF6 (KIF6) from Homo sapiens (Human).